A 259-amino-acid polypeptide reads, in one-letter code: Energy-coupling factor transporter ATP-binding protein EcfA1 (259 aa).

In terms of domain architecture, ABC transporter spans 3 to 230 (ITLNSVSFRY…EFDDVEIPFK (228 aa)). An ATP-binding site is contributed by 38–43 (GSGKTT). E157 serves as the catalytic Proton acceptor.

Belongs to the ABC transporter superfamily. Energy-coupling factor EcfA family. As to quaternary structure, forms a heterodimer with EcfA2. Forms a stable energy-coupling factor (ECF) transporter complex composed of 2 membrane-embedded substrate-binding proteins (S component, RibU, BioY), 2 ATP-binding proteins (A component) and 2 transmembrane proteins (T component) upon coexpression in E.coli. Stable subcomplexes with both A plus T components can also be isolated. This complex interacts with at least 2 substrate-specific components, BioY and RibU.

It is found in the cell inner membrane. ATP-binding (A) component of a common energy-coupling factor (ECF) ABC-transporter complex. Unlike classic ABC transporters this ECF transporter provides the energy necessary to transport a number of different substrates. Expression of the complex plus RibU in E.coli allows riboflavin uptake; uptake does not occur in the absence of RibU or the EcfA1A2T complex. The protein is Energy-coupling factor transporter ATP-binding protein EcfA1 of Thermotoga maritima (strain ATCC 43589 / DSM 3109 / JCM 10099 / NBRC 100826 / MSB8).